A 464-amino-acid polypeptide reads, in one-letter code: MNTLLVGINVAVMLILVGVLYYMQRKHVSFNKRVFTALGIGIIFGLILQFIYEPTSKVIIESNTWFGLIGSGYVKLLQMIVMPLILVSIISAFTKLQLTKNLGKISGLIIGILILTTGIAAAVGIAASAGFDVSATGLQQGDAESARLKLVEERFTSIEKTTIPDKLLELLPTNPFLDLTGARPTSTISVVIFAAFIGIAFIGVKRKYPEQAELFKKMLDAVYAIVMRMVTLILRLTPYGVLALMAKTVAGSDINAILKLGNFVLASYVALIVMFVIHLLLIALSGLNPIQYLKKVFPVLTFAFTSRSSAGAMPLNIEAQKEKLGISEGIANFAASFGVSIGQNGCAGIYPAMLAMMVAPTVGIDPLQPQFILTLIAVVAISSFGVAGVGGGATFAALIVLSTMNLPIGIVALVISVEPLIDMGRTALNVSGSMTAGLISSKWLGELDQDTYNQDDTKTGEIAS.

10 helical membrane-spanning segments follow: residues 3–23 (TLLV…LYYM), 34–54 (VFTA…IYEP), 73–93 (YVKL…ISAF), 107–127 (GLII…GIAA), 184–204 (PTST…FIGV), 225–245 (IVMR…LALM), 263–283 (FVLA…LLIA), 347–367 (AGIY…IDPL), 371–391 (FILT…GVGG), and 395–415 (FAAL…ALVI).

This sequence belongs to the dicarboxylate/amino acid:cation symporter (DAACS) (TC 2.A.23) family.

It is found in the membrane. Its function is as follows. Mediates uptake of L-cystine, the oxidized form of L-cysteine. This chain is L-cystine uptake protein TcyP, found in Bacillus thuringiensis (strain Al Hakam).